The primary structure comprises 610 residues: Elongation factor 4 (610 aa).

The tr-type G domain occupies 11 to 193 (EKIRNFSIIA…QIVEKVPAPT (183 aa)). Residues 23 to 28 (DHGKST) and 140 to 143 (NKID) each bind GTP.

The protein belongs to the TRAFAC class translation factor GTPase superfamily. Classic translation factor GTPase family. LepA subfamily.

It localises to the cell membrane. The catalysed reaction is GTP + H2O = GDP + phosphate + H(+). Functionally, required for accurate and efficient protein synthesis under certain stress conditions. May act as a fidelity factor of the translation reaction, by catalyzing a one-codon backward translocation of tRNAs on improperly translocated ribosomes. Back-translocation proceeds from a post-translocation (POST) complex to a pre-translocation (PRE) complex, thus giving elongation factor G a second chance to translocate the tRNAs correctly. Binds to ribosomes in a GTP-dependent manner. The polypeptide is Elongation factor 4 (Streptococcus pyogenes serotype M2 (strain MGAS10270)).